Consider the following 387-residue polypeptide: Proteinase R (387 aa).

The signal sequence occupies residues 1 to 21 (MRLSILLGLLPLAPRPPAVDA). A propeptide spanning residues 22-108 (VEQRSEPAPL…IEQDAIVNIN (87 aa)) is cleaved from the precursor. An Inhibitor I9 domain is found at 42 to 107 (KYIVKLKEGS…YIEQDAIVNI (66 aa)). One can recognise a Peptidase S8 domain in the interval 115–387 (PWGLARISST…NLLAYNNYQG (273 aa)). T124 is a Ca(2+) binding site. 2 cysteine pairs are disulfide-bonded: C142–C231 and C286–C357. Active-site charge relay system residues include D147 and H177. A Ca(2+)-binding site is contributed by D308. Residue S332 is the Charge relay system of the active site. Residue D368 coordinates Ca(2+).

Belongs to the peptidase S8 family. Requires Ca(2+) as cofactor.

Functionally, serine proteinase. This chain is Proteinase R (PROR), found in Parengyodontium album (Tritirachium album).